The chain runs to 426 residues: Serine/threonine-protein kinase ssn3 (426 aa).

One can recognise a Protein kinase domain in the interval tyrosine 41–phenylalanine 368. Residues isoleucine 47–valine 55 and lysine 71 contribute to the ATP site. Aspartate 173 (proton acceptor) is an active-site residue. The segment at arginine 390–glutamate 426 is disordered.

It belongs to the protein kinase superfamily. CMGC Ser/Thr protein kinase family. CDC2/CDKX subfamily. Component of the srb8-11 complex, a regulatory module of the Mediator complex. Mg(2+) serves as cofactor.

The protein localises to the nucleus. It catalyses the reaction L-seryl-[protein] + ATP = O-phospho-L-seryl-[protein] + ADP + H(+). The enzyme catalyses L-threonyl-[protein] + ATP = O-phospho-L-threonyl-[protein] + ADP + H(+). The catalysed reaction is [DNA-directed RNA polymerase] + ATP = phospho-[DNA-directed RNA polymerase] + ADP + H(+). In terms of biological role, component of the srb8-11 complex. The srb8-11 complex is a regulatory module of the Mediator complex which is itself involved in regulation of basal and activated RNA polymerase II-dependent transcription. The srb8-11 complex may be involved in the transcriptional repression of a subset of genes regulated by Mediator. It may inhibit the association of the Mediator complex with RNA polymerase II to form the holoenzyme complex. The srb8-11 complex phosphorylates the C-terminal domain (CTD) of the largest subunit of RNA polymerase II. The polypeptide is Serine/threonine-protein kinase ssn3 (ssn3) (Aspergillus fumigatus (strain ATCC MYA-4609 / CBS 101355 / FGSC A1100 / Af293) (Neosartorya fumigata)).